A 249-amino-acid polypeptide reads, in one-letter code: Proteasome activator complex subunit 1 (249 aa).

Residues 60 to 102 are disordered; it reads PLDIPVPDPVKEKEKEERKKQQEKEEKDEKKKGDEDDKGPPCG. Positions 68–98 are enriched in basic and acidic residues; sequence PVKEKEKEERKKQQEKEEKDEKKKGDEDDKG.

This sequence belongs to the PA28 family. As to quaternary structure, heterodimer of PSME1 and PSME2, which forms a hexameric ring. PSME1 can form homoheptamers.

Functionally, implicated in immunoproteasome assembly and required for efficient antigen processing. The PA28 activator complex enhances the generation of class I binding peptides by altering the cleavage pattern of the proteasome. The protein is Proteasome activator complex subunit 1 (Psme1) of Rattus norvegicus (Rat).